The primary structure comprises 55 residues: Large ribosomal subunit protein bL33 (55 aa).

The protein belongs to the bacterial ribosomal protein bL33 family.

This Bartonella quintana (strain Toulouse) (Rochalimaea quintana) protein is Large ribosomal subunit protein bL33.